The chain runs to 403 residues: Tripartite motif-containing protein 59 (403 aa).

The RING-type zinc finger occupies 10-60 (CPICYSIFEDPRVLPCSHTFCRNCLENVLQASGNFYIWRPLRIPLKCPNCR). A B box-type zinc finger spans residues 92-134 (PDVVTCPEHYRQPLNVYCLLDKKLVCGHCLTIGQHHGHPIDDL). 4 residues coordinate Zn(2+): C97, H100, C120, and H126. A coiled-coil region spans residues 163-246 (LIEKLEEQKC…TITTSLQDES (84 aa)). A helical transmembrane segment spans residues 329-349 (ILNIAIVSLISVILMLILLFN).

The protein belongs to the TRIM/RBCC family. As to quaternary structure, interacts with ECSIT. As to expression, moderately expressed in the spleen, brain and heart and very highly expressed in the testis.

It localises to the endoplasmic reticulum membrane. It catalyses the reaction S-ubiquitinyl-[E2 ubiquitin-conjugating enzyme]-L-cysteine + [acceptor protein]-L-lysine = [E2 ubiquitin-conjugating enzyme]-L-cysteine + N(6)-ubiquitinyl-[acceptor protein]-L-lysine.. It participates in protein modification; protein ubiquitination. In terms of biological role, E3 ubiquitin ligase involved in different processes such as development and immune response. Serves as a negative regulator for innate immune signaling pathways by suppressing RLR-induced activation of IRF3/7 and NF-kappa-B via interaction with adapter ECSIT. Regulates autophagy through modulating both the transcription and the ubiquitination of BECN1. On the one hand, regulates the transcription of BECN1 through negatively modulating the NF-kappa-B pathway. On the other hand, regulates TRAF6-mediated 'Lys-63'-linked ubiquitination of BECN1, thus affecting the formation of the BECN1-PIK3C3 complex. In addition, mediates 'Lys-48'-linked ubiquitination of TRAF6 and thereby promotes TRAF6 proteasomal degradation. Also acts as a critical regulator for early embryo development from blastocyst stage to gastrula through modulating F-actin assembly and WASH1 'Lys-63'-linked ubiquitination. This chain is Tripartite motif-containing protein 59 (Trim59), found in Mus musculus (Mouse).